Consider the following 151-residue polypeptide: Phosphopantetheine adenylyltransferase (151 aa).

Residue threonine 9 coordinates substrate. ATP is bound by residues 9-10 (TF) and histidine 17. Residues lysine 41, threonine 73, and arginine 87 each coordinate substrate. Residues 88-90 (GIR), glutamate 98, and 122-128 (LTCVSST) contribute to the ATP site.

It belongs to the bacterial CoaD family. As to quaternary structure, homohexamer. Requires Mg(2+) as cofactor.

It localises to the cytoplasm. The enzyme catalyses (R)-4'-phosphopantetheine + ATP + H(+) = 3'-dephospho-CoA + diphosphate. The protein operates within cofactor biosynthesis; coenzyme A biosynthesis; CoA from (R)-pantothenate: step 4/5. Functionally, reversibly transfers an adenylyl group from ATP to 4'-phosphopantetheine, yielding dephospho-CoA (dPCoA) and pyrophosphate. In Bacteroides thetaiotaomicron (strain ATCC 29148 / DSM 2079 / JCM 5827 / CCUG 10774 / NCTC 10582 / VPI-5482 / E50), this protein is Phosphopantetheine adenylyltransferase.